A 180-amino-acid chain; its full sequence is ATP-dependent protease subunit HslV (180 aa).

The active site involves Thr-7. 3 residues coordinate Na(+): Gly-165, Cys-168, and Thr-171.

It belongs to the peptidase T1B family. HslV subfamily. As to quaternary structure, a double ring-shaped homohexamer of HslV is capped on each side by a ring-shaped HslU homohexamer. The assembly of the HslU/HslV complex is dependent on binding of ATP.

It localises to the cytoplasm. It carries out the reaction ATP-dependent cleavage of peptide bonds with broad specificity.. Allosterically activated by HslU binding. Protease subunit of a proteasome-like degradation complex believed to be a general protein degrading machinery. The sequence is that of ATP-dependent protease subunit HslV from Bacillus anthracis (strain A0248).